The primary structure comprises 346 residues: MQTLNTLDLQTTSLKIVNGQLWILDQQALPQRQEWLLADTVASLIEHIQALRVRGAPLIGLSASLLLALLAERGLSQALLEQALIALRESRPTAVNLMNNLARMQQALLQPNWVTAMAAEALRLVDEDRELCERIAQHGAALVKPGSNLLTHCNTGGLATAGIGTAIGVLLRAHQQGNLRQVWVDETRPLLQGGRLTAWELGELGIPYQLICDSMAASLMAHGQVDAIWVGADRIAANGDVANKIGTYSLAVLAHYHRIPFYVAAPHTTHDPDCPDGAAIPIEQRAASEVTGVSGGFGHCQWAPKDTAVYNPAFDVTPAALISGWVLDSGVITPEQVAAGFFQPHR.

Residues 54–56, arginine 91, and glutamine 192 each bind substrate; that span reads RGA. Aspartate 233 functions as the Proton donor in the catalytic mechanism. 243 to 244 lines the substrate pocket; the sequence is NK.

It belongs to the eIF-2B alpha/beta/delta subunits family. MtnA subfamily.

It catalyses the reaction 5-(methylsulfanyl)-alpha-D-ribose 1-phosphate = 5-(methylsulfanyl)-D-ribulose 1-phosphate. It participates in amino-acid biosynthesis; L-methionine biosynthesis via salvage pathway; L-methionine from S-methyl-5-thio-alpha-D-ribose 1-phosphate: step 1/6. In terms of biological role, catalyzes the interconversion of methylthioribose-1-phosphate (MTR-1-P) into methylthioribulose-1-phosphate (MTRu-1-P). This is Methylthioribose-1-phosphate isomerase from Yersinia pseudotuberculosis serotype IB (strain PB1/+).